The primary structure comprises 258 residues: MPRYKLTIEYDGTPFAGWQIQAELPTVQGVLAAAVKGFSGEEAHVAGAGRTDAGVHATGQVAHIHLARDWRPDQVRDAMTAHLRPHPVAVVAVERVADDFDARFSAVKRHYLYRIVNRRPDLALDRDRAWRVPQKLDASAMHVAAQRLLGKHDFTTFRAAECQAASPEKTLDQLDVMRSGDDIRIVTSARSFLHHQVRSMVGSLIRVGEGRWSADDLADALAARDRRRCGPMAPACGLYLAAVSYPEQIVETGAPDRI.

The active-site Nucleophile is Asp-52. Residue Tyr-111 participates in substrate binding.

This sequence belongs to the tRNA pseudouridine synthase TruA family. As to quaternary structure, homodimer.

The enzyme catalyses uridine(38/39/40) in tRNA = pseudouridine(38/39/40) in tRNA. Functionally, formation of pseudouridine at positions 38, 39 and 40 in the anticodon stem and loop of transfer RNAs. This chain is tRNA pseudouridine synthase A, found in Azorhizobium caulinodans (strain ATCC 43989 / DSM 5975 / JCM 20966 / LMG 6465 / NBRC 14845 / NCIMB 13405 / ORS 571).